Consider the following 948-residue polypeptide: Bifunctional glutamine synthetase adenylyltransferase/adenylyl-removing enzyme (948 aa).

The interval 1–445 is adenylyl removase; the sequence is MAPPPDTSGS…IFTEVIAEPP (445 aa). Residues 451–948 are adenylyl transferase; it reads EPLLDGGEAE…WKQIIEAPVF (498 aa).

This sequence belongs to the GlnE family. Requires Mg(2+) as cofactor.

The catalysed reaction is [glutamine synthetase]-O(4)-(5'-adenylyl)-L-tyrosine + phosphate = [glutamine synthetase]-L-tyrosine + ADP. The enzyme catalyses [glutamine synthetase]-L-tyrosine + ATP = [glutamine synthetase]-O(4)-(5'-adenylyl)-L-tyrosine + diphosphate. Involved in the regulation of glutamine synthetase GlnA, a key enzyme in the process to assimilate ammonia. When cellular nitrogen levels are high, the C-terminal adenylyl transferase (AT) inactivates GlnA by covalent transfer of an adenylyl group from ATP to specific tyrosine residue of GlnA, thus reducing its activity. Conversely, when nitrogen levels are low, the N-terminal adenylyl removase (AR) activates GlnA by removing the adenylyl group by phosphorolysis, increasing its activity. The regulatory region of GlnE binds the signal transduction protein PII (GlnB) which indicates the nitrogen status of the cell. The chain is Bifunctional glutamine synthetase adenylyltransferase/adenylyl-removing enzyme from Methylococcus capsulatus (strain ATCC 33009 / NCIMB 11132 / Bath).